The chain runs to 240 residues: uncharacterized protein (240 aa).

Over 1–85 the chain is Cytoplasmic; it reads MSGFIKSTLL…LCGCCCWTNT (85 aa). A helical membrane pass occupies residues 86 to 106; it reads IGWAPLLALLPVIGPLLMYWV. At 107 to 131 the chain is on the extracellular side; the sequence is HDKLIELADDRYKLPAEIKVKMHGN. Residues 132 to 152 form a helical membrane-spanning segment; it reads IVIDLLISLVPILGSVFAWLH. Over 153-240 the chain is Cytoplasmic; that stretch reads ACSTRNAAIV…TNGRPQRGYR (88 aa). Positions 181 to 240 are disordered; sequence QKEENEKHSNANTAPPVVGGNKNVNGNRNNSKMYNRPPVTAPPAPAYTRSTNGRPQRGYR. Over residues 197 to 210 the composition is skewed to low complexity; sequence VVGGNKNVNGNRNN.

The protein localises to the membrane. This is an uncharacterized protein from Saccharomyces cerevisiae (strain ATCC 204508 / S288c) (Baker's yeast).